The primary structure comprises 65 residues: Disintegrin CC8A (65 aa).

In terms of domain architecture, Disintegrin spans 1–65 (MNSAHPCCDP…SDCPRNRIKK (65 aa)). 4 disulfide bridges follow: Cys7–Cys30, Cys21–Cys27, Cys26–Cys51, and Cys39–Cys58. A Cell attachment site motif is present at residues 43–45 (RGD).

This sequence belongs to the disintegrin family. Dimeric disintegrin subfamily. Heterodimer with CC8B; disulfide-linked. Expressed by the venom gland.

The protein localises to the secreted. In terms of biological role, inhibits integrins alpha-IIb/beta-3 (ITGA2B/ITGB3), alpha-V/beta-3 (ITGAV/ITGB3), and alpha-5/beta-1 (ITGA5/ITGB1). The sequence is that of Disintegrin CC8A from Cerastes cerastes (Horned desert viper).